The sequence spans 474 residues: tRNA-2-methylthio-N(6)-dimethylallyladenosine synthase (474 aa).

In terms of domain architecture, MTTase N-terminal spans 3-120 (KKLHIKTWGC…LPEMINHVNG (118 aa)). [4Fe-4S] cluster-binding residues include Cys-12, Cys-49, Cys-83, Cys-157, Cys-161, and Cys-164. A Radical SAM core domain is found at 143-375 (RAEGPTAFVS…QERITQQAMQ (233 aa)). The TRAM domain maps to 378–441 (RRMKGKVQRI…PNSLRGVLLR (64 aa)).

Belongs to the methylthiotransferase family. MiaB subfamily. Monomer. [4Fe-4S] cluster is required as a cofactor.

It localises to the cytoplasm. The enzyme catalyses N(6)-dimethylallyladenosine(37) in tRNA + (sulfur carrier)-SH + AH2 + 2 S-adenosyl-L-methionine = 2-methylsulfanyl-N(6)-dimethylallyladenosine(37) in tRNA + (sulfur carrier)-H + 5'-deoxyadenosine + L-methionine + A + S-adenosyl-L-homocysteine + 2 H(+). Catalyzes the methylthiolation of N6-(dimethylallyl)adenosine (i(6)A), leading to the formation of 2-methylthio-N6-(dimethylallyl)adenosine (ms(2)i(6)A) at position 37 in tRNAs that read codons beginning with uridine. In Sodalis glossinidius (strain morsitans), this protein is tRNA-2-methylthio-N(6)-dimethylallyladenosine synthase.